Consider the following 405-residue polypeptide: MGSYMNKTSVVKVGNVLIGGDNPVVVQSMTDTYTADVEKTVKQILALHKAGSEIVRITVNDEPAAAAVPEIVKELANHDCHVPLVGDFHYNGHTLLSKYPECAKALAKYRINPGNVGFGKKKDTQFAEIIKIAIANDKPVRIGVNWGSLDQALLARLIDENNAQENPLSLQQIMHKALITSALESAKYAEELGLAKDKIIISCKVSEVQDLIAVYQKLAKECDYALHLGLTEAGMGTKGIVASAVSLGILLQQGIGNTIRVSLTPAPNAPRTEEVRVCREILQNLGMRTFTPSVTSCPGCGRTTSSFFRELTSKVKDHLDEKMHTWKEQYHGVEAMKVAVMGCVVNGPGESKNADIGISLPGSGESPVAPVFIDGKKAHTLRGDNISEEFIEIVENYVKNRYGKK.

[4Fe-4S] cluster is bound by residues cysteine 297, cysteine 300, cysteine 343, and glutamate 350.

Belongs to the IspG family. [4Fe-4S] cluster is required as a cofactor.

It carries out the reaction (2E)-4-hydroxy-3-methylbut-2-enyl diphosphate + oxidized [flavodoxin] + H2O + 2 H(+) = 2-C-methyl-D-erythritol 2,4-cyclic diphosphate + reduced [flavodoxin]. It participates in isoprenoid biosynthesis; isopentenyl diphosphate biosynthesis via DXP pathway; isopentenyl diphosphate from 1-deoxy-D-xylulose 5-phosphate: step 5/6. In terms of biological role, converts 2C-methyl-D-erythritol 2,4-cyclodiphosphate (ME-2,4cPP) into 1-hydroxy-2-methyl-2-(E)-butenyl 4-diphosphate. This chain is 4-hydroxy-3-methylbut-2-en-1-yl diphosphate synthase (flavodoxin), found in Francisella tularensis subsp. novicida (strain U112).